Here is a 191-residue protein sequence, read N- to C-terminus: UPF0312 protein PSPA7_0523 (191 aa).

A signal peptide spans 1–23; that stretch reads MLKKTLAALALGSALFTAGQAMA.

The protein belongs to the UPF0312 family. Type 1 subfamily.

It localises to the periplasm. The protein is UPF0312 protein PSPA7_0523 of Pseudomonas paraeruginosa (strain DSM 24068 / PA7) (Pseudomonas aeruginosa (strain PA7)).